Here is a 191-residue protein sequence, read N- to C-terminus: Peptidyl-tRNA hydrolase (191 aa).

Tyr-15 is a binding site for tRNA. The active-site Proton acceptor is the His-20. TRNA contacts are provided by Phe-66, Asn-68, and Asn-114.

Belongs to the PTH family. Monomer.

It is found in the cytoplasm. It catalyses the reaction an N-acyl-L-alpha-aminoacyl-tRNA + H2O = an N-acyl-L-amino acid + a tRNA + H(+). Hydrolyzes ribosome-free peptidyl-tRNAs (with 1 or more amino acids incorporated), which drop off the ribosome during protein synthesis, or as a result of ribosome stalling. Functionally, catalyzes the release of premature peptidyl moieties from peptidyl-tRNA molecules trapped in stalled 50S ribosomal subunits, and thus maintains levels of free tRNAs and 50S ribosomes. This Streptococcus agalactiae serotype III (strain NEM316) protein is Peptidyl-tRNA hydrolase.